A 421-amino-acid polypeptide reads, in one-letter code: Testin (421 aa).

The region spanning 92–199 (MILTNPVAAK…GDVKLPREMD (108 aa)) is the PET domain. Residues 134 to 164 (KQPVAGSEGAQYRKKQLAKQLPAHDQDPSKC) form a disordered region. The segment covering 155–164 (PAHDQDPSKC) has biased composition (basic and acidic residues). LIM zinc-binding domains follow at residues 234 to 297 (YSCY…CDSE), 299 to 359 (PRCA…NHAV), and 362 to 421 (QGCH…KMMS).

This sequence belongs to the prickle / espinas / testin family. In terms of assembly, interacts via LIM domain 1 with ZYX. Interacts (via LIM domain 3) with ENAH and VASP. Interacts with ALKBH4, talin, actin, alpha-actinin, GRIP1 and PXN. Interacts (via LIM domain 2) with ACTL7A (via N-terminus). Heterodimer with ACTL7A; the heterodimer interacts with ENAH to form a heterotrimer.

It is found in the cytoplasm. The protein localises to the cell junction. It localises to the focal adhesion. Its function is as follows. Scaffold protein that may play a role in cell adhesion, cell spreading and in the reorganization of the actin cytoskeleton. Plays a role in the regulation of cell proliferation. May act as a tumor suppressor. The protein is Testin (TES) of Rhinolophus ferrumequinum (Greater horseshoe bat).